A 121-amino-acid polypeptide reads, in one-letter code: Flagellar hook-basal body complex protein FliE (121 aa).

The protein belongs to the FliE family.

The protein localises to the bacterial flagellum basal body. The chain is Flagellar hook-basal body complex protein FliE from Saccharophagus degradans (strain 2-40 / ATCC 43961 / DSM 17024).